We begin with the raw amino-acid sequence, 122 residues long: Large ribosomal subunit protein bL12 (122 aa).

Belongs to the bacterial ribosomal protein bL12 family. Homodimer. Part of the ribosomal stalk of the 50S ribosomal subunit. Forms a multimeric L10(L12)X complex, where L10 forms an elongated spine to which 2 to 4 L12 dimers bind in a sequential fashion. Binds GTP-bound translation factors.

Functionally, forms part of the ribosomal stalk which helps the ribosome interact with GTP-bound translation factors. Is thus essential for accurate translation. In Streptococcus mutans serotype c (strain ATCC 700610 / UA159), this protein is Large ribosomal subunit protein bL12.